A 204-amino-acid chain; its full sequence is FMN-dependent NADH:quinone oxidoreductase (204 aa).

FMN is bound by residues serine 9, 15–17 (SVS), and 97–100 (MYNF).

This sequence belongs to the azoreductase type 1 family. In terms of assembly, homodimer. Requires FMN as cofactor.

It carries out the reaction 2 a quinone + NADH + H(+) = 2 a 1,4-benzosemiquinone + NAD(+). The catalysed reaction is N,N-dimethyl-1,4-phenylenediamine + anthranilate + 2 NAD(+) = 2-(4-dimethylaminophenyl)diazenylbenzoate + 2 NADH + 2 H(+). Functionally, quinone reductase that provides resistance to thiol-specific stress caused by electrophilic quinones. In terms of biological role, also exhibits azoreductase activity. Catalyzes the reductive cleavage of the azo bond in aromatic azo compounds to the corresponding amines. This chain is FMN-dependent NADH:quinone oxidoreductase, found in Methylobacterium radiotolerans (strain ATCC 27329 / DSM 1819 / JCM 2831 / NBRC 15690 / NCIMB 10815 / 0-1).